Reading from the N-terminus, the 432-residue chain is Trigger factor (432 aa).

The PPIase FKBP-type domain maps to 161-246; sequence EDRVTIDFTG…LKKVEERELP (86 aa).

The protein belongs to the FKBP-type PPIase family. Tig subfamily.

The protein localises to the cytoplasm. It catalyses the reaction [protein]-peptidylproline (omega=180) = [protein]-peptidylproline (omega=0). In terms of biological role, involved in protein export. Acts as a chaperone by maintaining the newly synthesized protein in an open conformation. Functions as a peptidyl-prolyl cis-trans isomerase. This Cronobacter sakazakii (strain ATCC BAA-894) (Enterobacter sakazakii) protein is Trigger factor.